We begin with the raw amino-acid sequence, 630 residues long: DNA topoisomerase 4 subunit B (630 aa).

ATP is bound by residues tyrosine 5, asparagine 42, aspartate 69, 110-116 (GLHGVGI), and lysine 334. The Toprim domain occupies 412 to 525 (TELFLVEGDS…HGHVYVALPP (114 aa)). 3 residues coordinate Mg(2+): glutamate 418, aspartate 490, and aspartate 492.

Belongs to the type II topoisomerase family. ParE type 1 subfamily. As to quaternary structure, heterotetramer composed of ParC and ParE. The cofactor is Mg(2+). It depends on Mn(2+) as a cofactor. Ca(2+) is required as a cofactor.

The enzyme catalyses ATP-dependent breakage, passage and rejoining of double-stranded DNA.. With respect to regulation, pyrrolopyrimidines inhibit both GyrB and its paralog in topoisomerase IV (parE). Topoisomerase IV is essential for chromosome segregation; it is the principal protein responsible for decatenating newly replicated chromosomes. It relaxes supercoiled DNA. MukB stimulates the relaxation activity of topoisomerase IV and also has a modest effect on decatenation. The chain is DNA topoisomerase 4 subunit B from Escherichia coli (strain K12).